The chain runs to 303 residues: NAD(+)--arginine ADP-ribosyltransferase Lart1 (303 aa).

Its subcellular location is the secreted. It carries out the reaction L-arginyl-[protein] + NAD(+) = N(omega)-(ADP-D-ribosyl)-L-arginyl-[protein] + nicotinamide + H(+). ADP-ribosyltransferase that targets a specific class of NAD(+)-dependent glutamate dehydrogenase (GDH) enzymes found in fungi and protists, including many natural hosts of Legionella. Acts by targeting a conserved arginine residue in the NAD(+)-binding pocket of GDH, thereby blocking oxidative deamination of glutamate. Lart1 may target amoeba GDH to prevent a conserved stress response. In vitro, acts on Glud2 from the amoeba Dictyostelium discoideum (DdGluD2) and yeast Gdh2p but does not act on human or Legionella GDH homologs. The polypeptide is NAD(+)--arginine ADP-ribosyltransferase Lart1 (Legionella pneumophila subsp. pneumophila (strain Philadelphia 1 / ATCC 33152 / DSM 7513)).